The sequence spans 190 residues: Large ribosomal subunit protein uL5 (190 aa).

This sequence belongs to the universal ribosomal protein uL5 family. As to quaternary structure, part of the 50S ribosomal subunit; contacts the 5S rRNA and probably tRNA. Forms a bridge to the 30S subunit in the 70S ribosome.

Its function is as follows. This is one of the proteins that bind and probably mediate the attachment of the 5S RNA into the large ribosomal subunit, where it forms part of the central protuberance. In the 70S ribosome it contacts protein S13 of the 30S subunit (bridge B1b), connecting the 2 subunits; this bridge is implicated in subunit movement. May contact the P site tRNA; the 5S rRNA and some of its associated proteins might help stabilize positioning of ribosome-bound tRNAs. The sequence is that of Large ribosomal subunit protein uL5 from Methanocaldococcus jannaschii (strain ATCC 43067 / DSM 2661 / JAL-1 / JCM 10045 / NBRC 100440) (Methanococcus jannaschii).